The following is a 672-amino-acid chain: uncharacterized protein (672 aa).

Residues 1–10 show a composition bias toward basic and acidic residues; the sequence is MAKSDGDDPL. The tract at residues 1 to 41 is disordered; the sequence is MAKSDGDDPLRPASPRLRSSRRHSLRYSAYTGGPDPLAPPV.

This is an uncharacterized protein from Mycobacterium bovis (strain ATCC BAA-935 / AF2122/97).